The chain runs to 149 residues: Golgi apparatus membrane protein tvp-18 (149 aa).

An N-linked (GlcNAc...) asparagine glycan is attached at Asn-11. Helical transmembrane passes span 18-38 (WLGI…IFTF), 41-61 (IIIV…FVEV), 84-103 (NYTR…LSCI), and 108-128 (SLLV…LAAL).

It belongs to the TVP18 family.

The protein localises to the golgi apparatus membrane. Its function is as follows. Golgi membrane protein involved in vesicular trafficking. This Neurospora crassa (strain ATCC 24698 / 74-OR23-1A / CBS 708.71 / DSM 1257 / FGSC 987) protein is Golgi apparatus membrane protein tvp-18 (tvp-18).